Here is a 2149-residue protein sequence, read N- to C-terminus: Polyketide synthase 1 (2149 aa).

Residues 19–261 (FIFGDQSSCN…TRLAVHAPYH (243 aa)) form an N-terminal acylcarrier protein transacylase domain (SAT) region. The Ketosynthase family 3 (KS3) domain occupies 394–829 (ESKIAIIGMS…GGNTALLVED (436 aa)). Residues Cys-566, His-701, and His-745 each act as for beta-ketoacyl synthase activity in the active site. Positions 929 to 1233 (AFVFSGQGSQ…PSLMRNKDGW (305 aa)) are malonyl-CoA:ACP transacylase (MAT) domain. The active-site For acyl/malonyl transferase activity is the Ser-1018. The product template (PT) domain stretch occupies residues 1310–1624 (TASVHRIVHE…RKVLNTAMPP (315 aa)). The N-terminal hotdog fold stretch occupies residues 1314–1447 (HRIVHESVDK…SSLHFERPKV (134 aa)). Residues 1314–1619 (HRIVHESVDK…FQGIPRKVLN (306 aa)) form the PKS/mFAS DH domain. Catalysis depends on His-1346, which acts as the Proton acceptor; for dehydratase activity. Residues 1474–1619 (LNSRMSSGVI…FQGIPRKVLN (146 aa)) form a C-terminal hotdog fold region. Residue Asp-1533 is the Proton donor; for dehydratase activity of the active site. Positions 1619 to 1657 (NTAMPPPKSQNEAPVRSAPAKPAAKPPKSASSEHSGHFA) are disordered. Residues 1635 to 1650 (SAPAKPAAKPPKSASS) show a composition bias toward low complexity. The region spanning 1678–1752 (RNPMLAVFKI…DLATHLGLDT (75 aa)) is the Carrier 1 domain. Position 1712 is an O-(pantetheine 4'-phosphoryl)serine (Ser-1712). A compositionally biased stretch (low complexity) spans 1755 to 1790 (SDQSSGQSSSSGGLSPRSDSIGEITSSATTPPSLSP). Positions 1755–1796 (SDQSSGQSSSSGGLSPRSDSIGEITSSATTPPSLSPRGSVSG) are disordered. Residues 1793–1870 (SVSGSQCKDV…SFKHMFQQGH (78 aa)) enclose the Carrier 2 domain. Ser-1830 bears the O-(pantetheine 4'-phosphoryl)serine mark. Residues 1882-2147 (LKQYRATSTL…ERVAAFIRST (266 aa)) are thioesterase (TE) domain. Catalysis depends on Ser-1973, which acts as the For thioesterase activity.

In terms of biological role, polyketide synthase; part of the Pks1 gene cluster that mediates the biosynthesis of an anthraquinone derivative pigment that contributes to conidial pigmentation that provides protection from UV radiation, heat and cold stress. The polyketide synthase Pks1 produces 1-acetyl-2,4,6,8-tetrahydroxy-9,10-anthraquinone though condensation of acetyl-CoA with malonyl-CoA. The dehydratase EthD and the laccase Mlac1 further convert the anthraquinone derivative into the final conidial pigment. This Metarhizium majus (strain ARSEF 297) protein is Polyketide synthase 1.